A 461-amino-acid chain; its full sequence is Tol-Pal system protein TolB 2 (461 aa).

The N-terminal stretch at 1–20 (MKIRHLLLLAGLVSAPAIVA) is a signal peptide. Residues 28–47 (SSSAAQASGDDDGGLTGSVS) form a disordered region.

It belongs to the TolB family. The Tol-Pal system is composed of five core proteins: the inner membrane proteins TolA, TolQ and TolR, the periplasmic protein TolB and the outer membrane protein Pal. They form a network linking the inner and outer membranes and the peptidoglycan layer.

Its subcellular location is the periplasm. Its function is as follows. Part of the Tol-Pal system, which plays a role in outer membrane invagination during cell division and is important for maintaining outer membrane integrity. The sequence is that of Tol-Pal system protein TolB 2 from Novosphingobium aromaticivorans (strain ATCC 700278 / DSM 12444 / CCUG 56034 / CIP 105152 / NBRC 16084 / F199).